Consider the following 816-residue polypeptide: Probable disease resistance protein At4g33300 (816 aa).

Residues methionine 1–glycine 149 enclose the RPW8 domain. A coiled-coil region spans residues threonine 95 to leucine 111. An NB-ARC domain is found at valine 191–glutamate 443. An ATP-binding site is contributed by glycine 207–threonine 214. Positions serine 399 to threonine 415 form a coiled coil. 4 LRR repeats span residues serine 681–glutamine 704, alanine 705–leucine 727, glycine 729–leucine 751, and lysine 753–leucine 774.

It belongs to the disease resistance NB-LRR family.

Functionally, probable disease resistance protein. The protein is Probable disease resistance protein At4g33300 of Arabidopsis thaliana (Mouse-ear cress).